We begin with the raw amino-acid sequence, 1840 residues long: Neurexin 1 (1840 aa).

The interval 1-50 (MKAPHSATYQDNYADAAMTARTRPSMDMDQQRNRNQAELRLLPAQRTSTS) is disordered. At 1–1696 (MKAPHSATYQ…NSIEEERTAM (1696 aa)) the chain is on the extracellular side. Residues 24–37 (PSMDMDQQRNRNQA) show a composition bias toward basic and acidic residues. The Laminin G-like 1 domain maps to 104–289 (GFQLDGSQNS…RDIKCGDVPC (186 aa)). Residues 309 to 347 (TTDACERNDPCQHGGICISTDSGPICECRNLEYDGQYCE) form the EGF-like 1 domain. 8 cysteine pairs are disulfide-bonded: Cys313-Cys325, Cys319-Cys334, Cys336-Cys346, Cys511-Cys547, Cys710-Cys739, Cys746-Cys757, Cys751-Cys766, and Cys768-Cys778. Laminin G-like domains are found at residues 352–547 (PSEA…EYQC) and 554–739 (DPVT…KPSC). In terms of domain architecture, EGF-like 2 spans 742–779 (QANVCNGNPCLNGGTCLEGWNRPICDCSATLYGGPTCG). Laminin G-like domains follow at residues 784–964 (TLAF…LPSA) and 982–1158 (HAAT…VSGC). 4 disulfides stabilise this stretch: Cys1130/Cys1158, Cys1164/Cys1175, Cys1169/Cys1184, and Cys1186/Cys1196. Positions 1160–1197 (GPTKCSQNACANRGNCVQQWNAYACECDMTSYTGPTCY) constitute an EGF-like 3 domain. A Laminin G-like 6 domain is found at 1201-1416 (IAYEFGNNKG…LIFSGAGSGC (216 aa)). The segment at 1411–1651 (GAGSGCRGDD…DEHHPLPPLP (241 aa)) is disordered. Over residues 1447 to 1472 (QTTTSQQGNSLSTGGSSSGGVITNGT) the composition is skewed to low complexity. The span at 1491-1527 (TTEQFTSTSTARGSESNNEMVTITTTGRSDVTTEQHQ) shows a compositional bias: polar residues. Residues 1528 to 1600 (GSSSSSSSGS…TTTTTTTTQA (73 aa)) are compositionally biased toward low complexity. Residues 1632 to 1646 (RNDHDRMQLPDEHHP) are compositionally biased toward basic and acidic residues. A helical transmembrane segment spans residues 1697–1717 (IIGIVAGILIAVVLVILLVLW). The Cytoplasmic portion of the chain corresponds to 1718–1840 (LKSNGDRGYK…DSKDVKEWYV (123 aa)). The segment at 1737–1840 (GSHNPNAALL…DSKDVKEWYV (104 aa)) is disordered. Residues 1747–1757 (GNTSTNGSYHQ) show a composition bias toward polar residues. A compositionally biased stretch (low complexity) spans 1774-1787 (QQQHHAQQQMHNGH). Residues 1788–1813 (NGNGNGGGGGGGGMMSSGSGSLGYGS) show a composition bias toward gly residues. Residues Asp1831 and Asp1834 each coordinate Zn(2+). Over residues 1831-1840 (DSKDVKEWYV) the composition is skewed to basic and acidic residues. Positions 1837–1840 (EWYV) match the PDZ domain binding motif.

It belongs to the neurexin family. Interacts (via C-terminal PDZ binding motif) with CASK (via PDZ domain). Interacts (via cytoplasmic domain) with apolpp/ApoLI; the interaction supports apolpp/ApoLI protein stability. Interact (via cytoplasmic domain) with Spn/Spinophilin. Interacts with RhoGAP100F/Syd-1 (via PDZ domain); RhoGAP100F/Syd-1 may recruit Nrx-1 to the presynaptic active zone. Expressed in brain, with expression in medulla, lamina, lobula, lobula plate, mushroom body and antennal lobe, and in retina (at protein level). Expressed in rabdomere of photoreceptor cells (at protein level).

The protein localises to the synaptic cell membrane. Its subcellular location is the presynaptic cell membrane. The protein resides in the postsynaptic cell membrane. Functionally, neuronal cell adhesion protein involved in synapse formation, development of synaptic active zones, synaptic regulation and visual function. Plays a role in cell adhesion between the pre- and the postsynaptic cell. Required for proper proliferation of synaptic boutons during larval development, a process necessary for coordinated matching of pre-and postsynaptic compartments. Promotes presynaptic active zone formation and neurotransmitter release. Spn/Spinophilin fine-tunes nrx-1/nlg1 signaling at the pre-synapse to control active zone number and functionality and thereby optimizing action potential-induced exocytosis. Required for synapse formation in central nervous system. By regulating synapse formation, may play a role in larval associative learning. Together with RhoGAP100F/syd-1, controls synapse formation at the neuromuscular junction. Essential for synaptic vesicle cycling, which plays critical roles in neurotransmission at neuromuscular junctions (NMJ). Regulated and restricts formation of glutamate receptor clusters. Mediates retinoid transport and subsequent rhodopsin maturation and may regulate lipoprotein function; thereby playing a role in vision. Regulates sleep, circadian rhythm and synaptic plasticity. Together with CASK, required for locomotion. The sequence is that of Neurexin 1 from Drosophila melanogaster (Fruit fly).